Reading from the N-terminus, the 116-residue chain is Large ribosomal subunit protein bL17 (116 aa).

This sequence belongs to the bacterial ribosomal protein bL17 family. In terms of assembly, part of the 50S ribosomal subunit. Contacts protein L32.

The polypeptide is Large ribosomal subunit protein bL17 (Helicobacter pylori (strain P12)).